A 255-amino-acid polypeptide reads, in one-letter code: MAHSSATAGPQADYSGEIAELYDLVHQGKGKDYHREAADLAALVRRHSPKAASLLDVACGTGMHLRHLADSFGTVEGLELSADMLAIARRRNPDAVLHHGDMRDFSLGRRFSAVTCMFSSIGHLAGQAELDAALERFAAHVLPDGVVVVEPWWFPENFTPGYVAAGTVEAGGTTVTRVSHSSREGEATRIEVHYLVAGPDRGITHHEESHRITLFTREQYERAFTAAGLSVEFMPGGPSGRGLFTGLPGAKGETR.

S-adenosyl-L-methionine contacts are provided by residues Tyr-14, Tyr-22, Tyr-33, Ala-58, 58-59, Glu-79, 101-102, and Met-117; these read AC and DM.

It belongs to the methyltransferase TylM1/DesVI family. As to quaternary structure, homodimer.

The enzyme catalyses dTDP-3-amino-3,6-dideoxy-alpha-D-glucose + 2 S-adenosyl-L-methionine = dTDP-alpha-D-mycaminose + 2 S-adenosyl-L-homocysteine + 2 H(+). Its pathway is antibiotic biosynthesis; tylosin biosynthesis. Its function is as follows. S-adenosyl-L-methionine-dependent methyltransferase involved in the biosynthesis of mycaminose, an essential structural component of the macrolide antibiotic tylosin. Involved in the last step in mycaminose biosynthesis by mediating dimethylation of the hexose C-3' amino group. This Streptomyces fradiae (Streptomyces roseoflavus) protein is dTDP-3-amino-3,6-dideoxy-alpha-D-glucopyranose N,N-dimethyltransferase (tylM1).